The following is a 148-amino-acid chain: Deoxyuridine 5'-triphosphate nucleotidohydrolase (148 aa).

Substrate is bound by residues R67 to G69, N80, L84 to D86, and M94.

Belongs to the dUTPase family. Requires Mg(2+) as cofactor.

It carries out the reaction dUTP + H2O = dUMP + diphosphate + H(+). It functions in the pathway pyrimidine metabolism; dUMP biosynthesis; dUMP from dCTP (dUTP route): step 2/2. Its function is as follows. This enzyme is involved in nucleotide metabolism: it produces dUMP, the immediate precursor of thymidine nucleotides and it decreases the intracellular concentration of dUTP so that uracil cannot be incorporated into DNA. The chain is Deoxyuridine 5'-triphosphate nucleotidohydrolase from Burkholderia multivorans (strain ATCC 17616 / 249).